The primary structure comprises 226 residues: Thiamine-phosphate synthase (226 aa).

4-amino-2-methyl-5-(diphosphooxymethyl)pyrimidine-binding positions include 46–50 (QFRDK) and aspartate 83. 2 residues coordinate Mg(2+): aspartate 84 and aspartate 103. Serine 122 contributes to the 4-amino-2-methyl-5-(diphosphooxymethyl)pyrimidine binding site. 149 to 151 (TQS) serves as a coordination point for 2-[(2R,5Z)-2-carboxy-4-methylthiazol-5(2H)-ylidene]ethyl phosphate. Lysine 152 contacts 4-amino-2-methyl-5-(diphosphooxymethyl)pyrimidine. Residues glycine 181 and 201–202 (IT) each bind 2-[(2R,5Z)-2-carboxy-4-methylthiazol-5(2H)-ylidene]ethyl phosphate.

This sequence belongs to the thiamine-phosphate synthase family. It depends on Mg(2+) as a cofactor.

It carries out the reaction 2-[(2R,5Z)-2-carboxy-4-methylthiazol-5(2H)-ylidene]ethyl phosphate + 4-amino-2-methyl-5-(diphosphooxymethyl)pyrimidine + 2 H(+) = thiamine phosphate + CO2 + diphosphate. It catalyses the reaction 2-(2-carboxy-4-methylthiazol-5-yl)ethyl phosphate + 4-amino-2-methyl-5-(diphosphooxymethyl)pyrimidine + 2 H(+) = thiamine phosphate + CO2 + diphosphate. The enzyme catalyses 4-methyl-5-(2-phosphooxyethyl)-thiazole + 4-amino-2-methyl-5-(diphosphooxymethyl)pyrimidine + H(+) = thiamine phosphate + diphosphate. It functions in the pathway cofactor biosynthesis; thiamine diphosphate biosynthesis; thiamine phosphate from 4-amino-2-methyl-5-diphosphomethylpyrimidine and 4-methyl-5-(2-phosphoethyl)-thiazole: step 1/1. Functionally, condenses 4-methyl-5-(beta-hydroxyethyl)thiazole monophosphate (THZ-P) and 2-methyl-4-amino-5-hydroxymethyl pyrimidine pyrophosphate (HMP-PP) to form thiamine monophosphate (TMP). In Haemophilus influenzae (strain ATCC 51907 / DSM 11121 / KW20 / Rd), this protein is Thiamine-phosphate synthase.